A 184-amino-acid chain; its full sequence is Gremlin-1 (184 aa).

Residues 1–24 (MSRTAYTVGALLLLLGTLLPAAEG) form the signal peptide. Positions 24-77 (GKKKGSQGAIPPPDKAQHNDSEQTQSPQQPGSRNRGRGQGRGTAMPGEEVLESS) are disordered. The N-linked (GlcNAc...) asparagine glycan is linked to N42. 4 disulfides stabilise this stretch: C94–C144, C108–C158, C118–C176, and C122–C178. In terms of domain architecture, CTCK spans 94-184 (CKTQPLKQTI…QCRCISIDLD (91 aa)).

It belongs to the DAN family. As to quaternary structure, homodimer; can also form homooligomers. Interacts with BMP2; can form higher oligomers with BMP2. Interacts with SLIT1 and SLIT2 in a glycosylation-dependent manner. In terms of tissue distribution, highly expressed in small intestine, fetal brain and colon. Expression is restricted to intestinal subepithelial myofibroblasts (ISEMFs) at the crypt base. In subjects with HMPS1, by contrast, GREM1 is expressed, not only in basal ISEMFs, but also at very high levels in epithelial cells (predominantly colonocytes), with expression extending most of the way up the sides of the crypt. Weakly expressed in brain, ovary, prostate, pancreas and skeletal muscle. In brain found in the region localized around the internal capsule in the large subcortical nuclei, including caudate, putamen, substantia nigra, thalamus and subthalamus. Predominantly expressed in normal cells including neurons, astrocytes and fibroblasts.

The protein localises to the secreted. In terms of biological role, cytokine that may play an important role during carcinogenesis and metanephric kidney organogenesis, as a BMP antagonist required for early limb outgrowth and patterning in maintaining the FGF4-SHH feedback loop. Down-regulates the BMP4 signaling in a dose-dependent manner. Antagonist of BMP2; inhibits BMP2-mediated differentiation of osteoblasts (in vitro). Acts as inhibitor of monocyte chemotaxis. Can inhibit the growth or viability of normal cells but not transformed cells when is overexpressed. The chain is Gremlin-1 (GREM1) from Homo sapiens (Human).